We begin with the raw amino-acid sequence, 377 residues long: Bacterial actin-related protein (377 aa).

The protein belongs to the actin family.

May be a dominant-negative inhibitor of eukaryotic actin polymerization. This chain is Bacterial actin-related protein (barP), found in Haliangium ochraceum (strain DSM 14365 / JCM 11303 / SMP-2).